The primary structure comprises 2876 residues: Nipped-B-like protein B (2876 aa).

Composition is skewed to polar residues over residues 124-142 and 149-167; these read PQNS…TTIT and YVQT…QNSP. Disordered stretches follow at residues 124–197, 246–367, 439–494, and 525–1017; these read PQNS…PIQQ, NDEG…SDAE, RESA…AGNK, and EGPV…FPNY. A compositionally biased stretch (pro residues) spans 276–290; the sequence is GPRPPLILQSPPPYT. A compositionally biased stretch (basic and acidic residues) spans 439-457; it reads RESAIERERCSKEVQDKDK. Residues 471–480 are compositionally biased toward low complexity; the sequence is PGAAGTAGAS. Residues 481–490 are compositionally biased toward gly residues; that stretch reads GTPGVGGGCN. 3 stretches are compositionally biased toward basic and acidic residues: residues 556-577, 586-955, and 962-1005; these read SKTD…KQRV, VDGR…EQRS, and VKQE…HKPQ. Residues 1068–1081 carry the PxVxL motif motif; it reads NKGAKPVVVLKKLS. Disordered regions lie at residues 1088–1229 and 1724–1747; these read MISN…EPKL and TEKA…KDVE. Over residues 1090–1100 the composition is skewed to low complexity; it reads SNSRSSKSSRS. Composition is skewed to basic and acidic residues over residues 1104-1119 and 1156-1183; these read RFRE…ERVK and KDRD…DSRR. Residues 1212 to 1223 show a composition bias toward basic residues; it reads KLKKKEKQKKRK. 5 HEAT repeats span residues 1803 to 1841, 1879 to 1917, 1981 to 2020, 2203 to 2241, and 2349 to 2387; these read AQSF…VDPS, PQLT…EQPT, YDWF…HILK, VVIK…QDPG, and LIHP…KYTG. 2 disordered regions span residues 2516–2590 and 2728–2774; these read EVVK…DSDL and ALLG…GHRN. A compositionally biased stretch (basic residues) spans 2519–2537; it reads KKKKKKKKKKKQKQKRGKK. Residues 2548 to 2563 show a composition bias toward low complexity; that stretch reads RSSSSSSSSSSSSSDS. Positions 2762–2774 are enriched in basic and acidic residues; sequence RTGDSAEASGHRN.

This sequence belongs to the SCC2/Nipped-B family.

Its subcellular location is the nucleus. Functionally, may play a structural role in chromatin. Involved in sister chromatid cohesion, possibly by facilitating the cohesin complex loading. Transcription factor, which may promote cortical neuron migration during brain development by regulating the transcription of crucial genes in this process. This Danio rerio (Zebrafish) protein is Nipped-B-like protein B (nipblb).